Here is a 251-residue protein sequence, read N- to C-terminus: Imidazole glycerol phosphate synthase subunit HisF (251 aa).

Active-site residues include aspartate 11 and aspartate 130.

The protein belongs to the HisA/HisF family. In terms of assembly, heterodimer of HisH and HisF.

It is found in the cytoplasm. It catalyses the reaction 5-[(5-phospho-1-deoxy-D-ribulos-1-ylimino)methylamino]-1-(5-phospho-beta-D-ribosyl)imidazole-4-carboxamide + L-glutamine = D-erythro-1-(imidazol-4-yl)glycerol 3-phosphate + 5-amino-1-(5-phospho-beta-D-ribosyl)imidazole-4-carboxamide + L-glutamate + H(+). Its pathway is amino-acid biosynthesis; L-histidine biosynthesis; L-histidine from 5-phospho-alpha-D-ribose 1-diphosphate: step 5/9. Its function is as follows. IGPS catalyzes the conversion of PRFAR and glutamine to IGP, AICAR and glutamate. The HisF subunit catalyzes the cyclization activity that produces IGP and AICAR from PRFAR using the ammonia provided by the HisH subunit. This Chlorobium phaeovibrioides (strain DSM 265 / 1930) (Prosthecochloris vibrioformis (strain DSM 265)) protein is Imidazole glycerol phosphate synthase subunit HisF.